A 68-amino-acid chain; its full sequence is Conotoxin VnMMSK-01 (68 aa).

The first 20 residues, 1 to 20 (MMSKLGVLLTICLLLFPLTA), serve as a signal peptide directing secretion. Positions 21-50 (VPMDGDQPADLPALRTQDFEPERSPWFDPV) are excised as a propeptide. 3 cysteine pairs are disulfide-bonded: Cys53–Cys65, Cys54–Cys61, and Cys58–Cys64. The residue at position 63 (Pro63) is a 4-hydroxyproline.

This sequence belongs to the conotoxin M superfamily. In terms of tissue distribution, expressed by the venom duct.

The protein resides in the secreted. This is Conotoxin VnMMSK-01 from Conus ventricosus (Mediterranean cone).